Reading from the N-terminus, the 228-residue chain is Probable septum site-determining protein MinC (228 aa).

Belongs to the MinC family. Interacts with MinD and FtsZ.

In terms of biological role, cell division inhibitor that blocks the formation of polar Z ring septums. Rapidly oscillates between the poles of the cell to destabilize FtsZ filaments that have formed before they mature into polar Z rings. Prevents FtsZ polymerization. The protein is Probable septum site-determining protein MinC of Bacillus cereus (strain G9842).